The sequence spans 101 residues: Small ribosomal subunit protein uS14 (101 aa).

The segment at 1-24 (MAKVSSIKKNEKRKKLSQSLHNKR) is disordered. Residues 10-24 (NEKRKKLSQSLHNKR) show a composition bias toward basic residues.

The protein belongs to the universal ribosomal protein uS14 family. Part of the 30S ribosomal subunit. Contacts proteins S3 and S10.

Binds 16S rRNA, required for the assembly of 30S particles and may also be responsible for determining the conformation of the 16S rRNA at the A site. The chain is Small ribosomal subunit protein uS14 from Rickettsia bellii (strain OSU 85-389).